Here is a 407-residue protein sequence, read N- to C-terminus: O-antigen polymerase (407 aa).

11 helical membrane-spanning segments follow: residues Leu2–Val22, Val31–Val51, Tyr63–Tyr83, Tyr101–Met121, Tyr141–Phe161, Leu168–Gly185, Ile190–Ile204, Phe211–Tyr231, Ala319–Leu339, Phe356–Phe376, and Ile382–Leu402.

It is found in the cell inner membrane. The enzyme catalyses n lipid-linked O-antigen repeat units = a lipid-linked O antigen + (n-1) polyisoprenyl diphosphate.. It participates in bacterial outer membrane biogenesis; LPS O-antigen biosynthesis. Its function is as follows. Polymerase involved in the biosynthesis of the lipopolysaccharide (LPS). Catalyzes the polymerization of the O-antigen repeat units on the periplasmic face of the inner membrane, leading to the formation of the lipid-linked O-antigen molecule. The chain is O-antigen polymerase (rfc) from Salmonella typhi.